An 860-amino-acid polypeptide reads, in one-letter code: Leucine--tRNA ligase (860 aa).

The short motif at 42–52 (PYPSGRLHMGH) is the 'HIGH' region element. The short motif at 619–623 (KMSKS) is the 'KMSKS' region element. Residue Lys-622 participates in ATP binding.

It belongs to the class-I aminoacyl-tRNA synthetase family.

The protein resides in the cytoplasm. It catalyses the reaction tRNA(Leu) + L-leucine + ATP = L-leucyl-tRNA(Leu) + AMP + diphosphate. This Escherichia coli O157:H7 protein is Leucine--tRNA ligase.